The sequence spans 475 residues: Chromosomal replication initiator protein DnaA (475 aa).

The segment at 1 to 73 is domain I, interacts with DnaA modulators; the sequence is MTNSEQERWS…LSCWQAEMPE (73 aa). Positions 73–131 are domain II; that stretch reads EVHRIDLSVRTAMRCATPAKEAPVAVEARRAERGDAKPADTRAPVMTPVAASHDALGGS. The segment at 132-354 is domain III, AAA+ region; sequence PLDPRLTFAS…GAINRLLAHS (223 aa). Glycine 179, glycine 181, lysine 182, and threonine 183 together coordinate ATP. The tract at residues 355-475 is domain IV, binds dsDNA; sequence KLNNQPVTLD…VEALKRQLQD (121 aa).

This sequence belongs to the DnaA family. Oligomerizes as a right-handed, spiral filament on DNA at oriC.

Its subcellular location is the cytoplasm. Plays an essential role in the initiation and regulation of chromosomal replication. ATP-DnaA binds to the origin of replication (oriC) to initiate formation of the DNA replication initiation complex once per cell cycle. Binds the DnaA box (a 9 base pair repeat at the origin) and separates the double-stranded (ds)DNA. Forms a right-handed helical filament on oriC DNA; dsDNA binds to the exterior of the filament while single-stranded (ss)DNA is stabiized in the filament's interior. The ATP-DnaA-oriC complex binds and stabilizes one strand of the AT-rich DNA unwinding element (DUE), permitting loading of DNA polymerase. After initiation quickly degrades to an ADP-DnaA complex that is not apt for DNA replication. Binds acidic phospholipids. This chain is Chromosomal replication initiator protein DnaA, found in Bradyrhizobium sp. (strain BTAi1 / ATCC BAA-1182).